A 588-amino-acid polypeptide reads, in one-letter code: Mitochondrial tRNA methylthiotransferase CDK5RAP1 (588 aa).

A mitochondrion-targeting transit peptide spans 1–30 (MHPLRCVLQVQRLSAPFTSMCWVLLRTCRA). Disordered regions lie at residues 33 to 53 (SVSS…QKDF) and 70 to 91 (ASVP…YLSG). An MTTase N-terminal domain is found at 99–219 (RKVYLETYGC…LPRLLAVVES (121 aa)). Positions 108, 144, 182, 257, 261, and 264 each coordinate [4Fe-4S] cluster. The 256-residue stretch at 243 to 498 (SPSATSAFVS…TVFREEASKA (256 aa)) folds into the Radical SAM core domain. The TRAM domain occupies 500-575 (KTSVGCSQLV…SQTLKGHILC (76 aa)).

This sequence belongs to the methylthiotransferase family. MiaB subfamily. In terms of assembly, interacts with CDK5R1 (p35 form). CDK5RAP1, CDK5RAP2 and CDK5RAP3 show competitive binding to CDK5R1. Probably forms a complex with CDK5R1 and CDK5. [4Fe-4S] cluster serves as cofactor. Expressed in brain, liver, skeletal muscle and heart.

Its subcellular location is the mitochondrion. It carries out the reaction N(6)-dimethylallyladenosine(37) in tRNA + (sulfur carrier)-SH + AH2 + 2 S-adenosyl-L-methionine = 2-methylsulfanyl-N(6)-dimethylallyladenosine(37) in tRNA + (sulfur carrier)-H + 5'-deoxyadenosine + L-methionine + A + S-adenosyl-L-homocysteine + 2 H(+). In terms of biological role, methylthiotransferase that catalyzes the conversion of N6-(dimethylallyl)adenosine (i(6)A) to 2-methylthio-N6-(dimethylallyl)adenosine (ms(2)i(6)A) at position 37 (adjacent to the 3'-end of the anticodon) of four mitochondrial DNA-encoded tRNAs (Ser(UCN), Phe, Tyr and Trp). Essential for efficient and highly accurate protein translation by the ribosome. Specifically inhibits CDK5 activation by CDK5R1. Essential for efficient mitochondrial protein synthesis and respiratory chain. In Mus musculus (Mouse), this protein is Mitochondrial tRNA methylthiotransferase CDK5RAP1.